Here is a 124-residue protein sequence, read N- to C-terminus: MDLHQLYLDRLRQRDRIEGNFCYLFEAAVVLETAQPPQDSRDLVAKSLREELHAHEQEIHKLKDIVHLRSKDAEKLNDEIISLNIENSLLQDKLTALQAEYDKLIQRWLAKAQSEADAMNQGLA.

Residues 42–107 (DLVAKSLREE…QAEYDKLIQR (66 aa)) are a coiled coil.

It belongs to the ATG16 family. As to quaternary structure, homodimer. Part of the ATG5-ATG12/ATG16 complex. Several units of each may be present in this complex.

Its subcellular location is the preautophagosomal structure membrane. Stabilizes the ATG5-ATG12 conjugate which is necessary for autophagy. The ATG5-ATG12/ATG16 complex is required for efficient promotion of ATG8-conjugation to phosphatidylethanolamine and ATG8 localization to the pre-autophagosomal structure (PAS). Also recruits ATG3 to the PAS. Involved in endoplasmic reticulum-specific autophagic process and is essential for the survival of cells subjected to severe ER stress. This is Autophagy protein 16 (ATG16) from Eremothecium gossypii (strain ATCC 10895 / CBS 109.51 / FGSC 9923 / NRRL Y-1056) (Yeast).